Consider the following 194-residue polypeptide: Holliday junction branch migration complex subunit RuvA (194 aa).

Residues 1–64 (MISRLTGKLV…EDAHLLFGFA (64 aa)) are domain I. A domain II region spans residues 65 to 143 (TAEERKTFRQ…AHAVTDGLFA (79 aa)). The segment at 144-147 (AAPA) is flexible linker. Residues 147–194 (AADETEDIVGTLLALGYSEREAKAAVKGVPKGTDVGEGVRLALKNLLK) are domain III.

It belongs to the RuvA family. Homotetramer. Forms an RuvA(8)-RuvB(12)-Holliday junction (HJ) complex. HJ DNA is sandwiched between 2 RuvA tetramers; dsDNA enters through RuvA and exits via RuvB. An RuvB hexamer assembles on each DNA strand where it exits the tetramer. Each RuvB hexamer is contacted by two RuvA subunits (via domain III) on 2 adjacent RuvB subunits; this complex drives branch migration. In the full resolvosome a probable DNA-RuvA(4)-RuvB(12)-RuvC(2) complex forms which resolves the HJ.

It localises to the cytoplasm. Functionally, the RuvA-RuvB-RuvC complex processes Holliday junction (HJ) DNA during genetic recombination and DNA repair, while the RuvA-RuvB complex plays an important role in the rescue of blocked DNA replication forks via replication fork reversal (RFR). RuvA specifically binds to HJ cruciform DNA, conferring on it an open structure. The RuvB hexamer acts as an ATP-dependent pump, pulling dsDNA into and through the RuvAB complex. HJ branch migration allows RuvC to scan DNA until it finds its consensus sequence, where it cleaves and resolves the cruciform DNA. In Neisseria meningitidis serogroup C / serotype 2a (strain ATCC 700532 / DSM 15464 / FAM18), this protein is Holliday junction branch migration complex subunit RuvA.